A 425-amino-acid polypeptide reads, in one-letter code: Histidine--tRNA ligase (425 aa).

The protein belongs to the class-II aminoacyl-tRNA synthetase family. As to quaternary structure, homodimer.

It is found in the cytoplasm. It carries out the reaction tRNA(His) + L-histidine + ATP = L-histidyl-tRNA(His) + AMP + diphosphate + H(+). This chain is Histidine--tRNA ligase, found in Shewanella oneidensis (strain ATCC 700550 / JCM 31522 / CIP 106686 / LMG 19005 / NCIMB 14063 / MR-1).